Reading from the N-terminus, the 314-residue chain is 2,3-dihydroxyphenylpropionate/2,3-dihydroxicinnamic acid 1,2-dioxygenase 2 (314 aa).

The active-site Proton donor is the His-115. His-179 functions as the Proton acceptor in the catalytic mechanism.

This sequence belongs to the LigB/MhpB extradiol dioxygenase family. As to quaternary structure, homotetramer. It depends on Fe(2+) as a cofactor.

The catalysed reaction is 3-(2,3-dihydroxyphenyl)propanoate + O2 = (2Z,4E)-2-hydroxy-6-oxonona-2,4-dienedioate + H(+). It catalyses the reaction (2E)-3-(2,3-dihydroxyphenyl)prop-2-enoate + O2 = (2Z,4E,7E)-2-hydroxy-6-oxonona-2,4,7-trienedioate + H(+). It participates in aromatic compound metabolism; 3-phenylpropanoate degradation. Functionally, catalyzes the non-heme iron(II)-dependent oxidative cleavage of 2,3-dihydroxyphenylpropionic acid and 2,3-dihydroxicinnamic acid into 2-hydroxy-6-ketononadienedioate and 2-hydroxy-6-ketononatrienedioate, respectively. The polypeptide is 2,3-dihydroxyphenylpropionate/2,3-dihydroxicinnamic acid 1,2-dioxygenase 2 (mhpB2) (Pseudomonas putida (Arthrobacter siderocapsulatus)).